The sequence spans 554 residues: Terpene synthase 17 (554 aa).

Residues Asp306, Asp310, and Glu458 each contribute to the Mg(2+) site. The short motif at 306–310 (DDTYD) is the DDXXD motif element.

This sequence belongs to the terpene synthase family. Tpsa subfamily. Requires Mg(2+) as cofactor. Mn(2+) serves as cofactor. In terms of tissue distribution, mostly expressed in stem and trichomes, to a lower extent in leaves, flowers and roots and, at low levels, in fruits.

The catalysed reaction is (2Z,6Z)-farnesyl diphosphate = beta-bisabolene + diphosphate. The enzyme catalyses (2E,6E)-farnesyl diphosphate = (+)-valencene + diphosphate. It catalyses the reaction (2E,6E)-farnesyl diphosphate = (E)-beta-farnesene + diphosphate. It carries out the reaction (2E,6E)-farnesyl diphosphate = gamma-gurjunene + diphosphate. The catalysed reaction is (2Z,6Z)-farnesyl diphosphate = (E)-gamma-bisabolene + diphosphate. The enzyme catalyses (2E)-geranyl diphosphate = limonene + diphosphate. It catalyses the reaction (2E)-geranyl diphosphate = beta-myrcene + diphosphate. It carries out the reaction (2E)-geranyl diphosphate = (E)-beta-ocimene + diphosphate. The catalysed reaction is (2E)-geranyl diphosphate = terpinolene + diphosphate. The enzyme catalyses (2E)-geranyl diphosphate = gamma-terpinene + diphosphate. It catalyses the reaction (2Z,6Z)-farnesyl diphosphate = (Z)-gamma-bisabolene + diphosphate. It carries out the reaction (2E,6E)-farnesyl diphosphate = (1S,5S,6R)-alpha-bergamotene + diphosphate. The catalysed reaction is (2Z,6Z)-farnesyl diphosphate = (1S,5S,6S)-alpha-bergamotene + diphosphate. It participates in secondary metabolite biosynthesis; terpenoid biosynthesis. Functionally, sesquiterpene synthase involved in the biosynthesis of volatile compounds. Mediates the conversion of (2E,6E)-farnesyl diphosphate (FPP) into gamma-gurjunene, (E)-beta-farnesene and (+)-valencene, and of (2Z,6Z)-farnesyl diphosphate ((ZZ)-FPP) into (E)-alpha-bergamotene and (Z)-gamma-bisabolene as well as beta-bisabolene, (Z)-alpha-bergamotene and (E)-gamma-bisabolene to a lower extent. Can act with a low efficiency as a monoterpene synthase with geranyl diphosphate (GPP) as substrate, thus producing beta-myrcene, (E)-beta-ocimene, limonene, terpinolene, gamma-terpinene and (Z)-beta-ocimene. The chain is Terpene synthase 17 from Solanum lycopersicum (Tomato).